The following is a 379-amino-acid chain: Citrate synthase (379 aa).

Active-site residues include His-225, His-265, and Asp-316.

The protein belongs to the citrate synthase family. As to quaternary structure, homodimer.

It carries out the reaction oxaloacetate + acetyl-CoA + H2O = citrate + CoA + H(+). Its pathway is carbohydrate metabolism; tricarboxylic acid cycle; isocitrate from oxaloacetate: step 1/2. Its function is as follows. Might regulate the synthesis and function of enzymes involved in later enzymatic steps of Krebs cycle. The protein is Citrate synthase (citZ) of Haloferax volcanii (strain ATCC 29605 / DSM 3757 / JCM 8879 / NBRC 14742 / NCIMB 2012 / VKM B-1768 / DS2) (Halobacterium volcanii).